A 256-amino-acid chain; its full sequence is Large ribosomal subunit protein bL21c (256 aa).

A chloroplast-targeting transit peptide spans 1 to 55 (MASATLAFSCSSLCATLKLPQNLNPLLLNVPPLSKPFSGVVSPPSLSRLSLLPVA).

Component of the chloroplast large ribosomal subunit (LSU). Mature 70S chloroplast ribosomes of higher plants consist of a small (30S) and a large (50S) subunit. The 30S small subunit contains 1 molecule of ribosomal RNA (16S rRNA) and 24 different proteins. The 50S large subunit contains 3 rRNA molecules (23S, 5S and 4.5S rRNA) and 33 different proteins.

The protein resides in the plastid. It is found in the chloroplast. Functionally, component of the chloroplast ribosome (chloro-ribosome), a dedicated translation machinery responsible for the synthesis of chloroplast genome-encoded proteins, including proteins of the transcription and translation machinery and components of the photosynthetic apparatus. The polypeptide is Large ribosomal subunit protein bL21c (RPL21) (Spinacia oleracea (Spinach)).